The chain runs to 142 residues: Lipoprotein MlpI (142 aa).

A signal peptide spans 1–17 (MKIINILFCLFLLMLNS). The N-palmitoyl cysteine moiety is linked to residue Cys18. Cys18 is lipidated: S-diacylglycerol cysteine. Residues 22–54 (DTNTSQTKSRQKRDLTQKEATQEKPKSKEDLLR) form a disordered region. Over residues 33 to 54 (KRDLTQKEATQEKPKSKEDLLR) the composition is skewed to basic and acidic residues.

The protein belongs to the Multicopy lipoprotein (Mlp) family.

It localises to the cell outer membrane. Its function is as follows. An outer membrane protein that may participate in pathogenesis. Some human Lyme disease patients have antibodies against this protein. The Mlp proteins probably undergo intragenic recombination, generating new alleles. The sequence is that of Lipoprotein MlpI from Borreliella burgdorferi (strain ATCC 35210 / DSM 4680 / CIP 102532 / B31) (Borrelia burgdorferi).